Reading from the N-terminus, the 44-residue chain is Conotoxin Fi11.11 (44 aa).

Disulfide bonds link cysteine 1/cysteine 15, cysteine 8/cysteine 20, cysteine 14/cysteine 24, and cysteine 19/cysteine 28. An Asparagine amide modification is found at asparagine 30. The propeptide occupies 35 to 44; that stretch reads QVPLKSFGQR.

It belongs to the conotoxin I2 superfamily. In terms of tissue distribution, expressed by the venom duct.

It is found in the secreted. The protein is Conotoxin Fi11.11 of Conus figulinus (Fig cone).